The primary structure comprises 291 residues: Sulfotransferase 1A1 (291 aa).

44 to 49 (KSGTTW) contacts 3'-phosphoadenylyl sulfate. Residue 102-104 (KTH) participates in substrate binding. The Proton acceptor role is filled by H104. 3'-phosphoadenylyl sulfate contacts are provided by residues R126, S134, Y189, 223–228 (TSFKKM), and 251–255 (FMRKG). S134 is modified (phosphoserine).

This sequence belongs to the sulfotransferase 1 family. As to quaternary structure, homodimer. Post-translationally, the N-terminus is blocked. Liver, kidney, heart and colon.

It localises to the cytoplasm. It carries out the reaction a phenol + 3'-phosphoadenylyl sulfate = an aryl sulfate + adenosine 3',5'-bisphosphate + H(+). The enzyme catalyses 17beta-estradiol + 3'-phosphoadenylyl sulfate = 17beta-estradiol 3-sulfate + adenosine 3',5'-bisphosphate + H(+). The catalysed reaction is 4-ethylphenol + 3'-phosphoadenylyl sulfate = 4-ethylphenyl sulfate + adenosine 3',5'-bisphosphate + H(+). It catalyses the reaction 4-nitrophenol + 3'-phosphoadenylyl sulfate = 4-nitrophenyl sulfate + adenosine 3',5'-bisphosphate. It carries out the reaction dopamine + 3'-phosphoadenylyl sulfate = dopamine 3-O-sulfate + adenosine 3',5'-bisphosphate + H(+). The enzyme catalyses dopamine + 3'-phosphoadenylyl sulfate = dopamine 4-O-sulfate + adenosine 3',5'-bisphosphate + H(+). The catalysed reaction is 3,3',5-triiodo-L-thyronine + 3'-phosphoadenylyl sulfate = 3,3',5-triiodo-L-thyronine sulfate + adenosine 3',5'-bisphosphate + H(+). It catalyses the reaction 3,3',5'-triiodo-L-thyronine + 3'-phosphoadenylyl sulfate = 3,3',5'-triiodo-L-thyronine sulfate + adenosine 3',5'-bisphosphate + H(+). It carries out the reaction 3,3'-diiodo-L-thyronine + 3'-phosphoadenylyl sulfate = 3,3'-diiodo-L-thyronine sulfate + adenosine 3',5'-bisphosphate + H(+). The enzyme catalyses L-thyroxine + 3'-phosphoadenylyl sulfate = L-thyroxine sulfate + adenosine 3',5'-bisphosphate + H(+). Its function is as follows. Sulfotransferase that utilizes 3'-phospho-5'-adenylyl sulfate (PAPS) as sulfonate donor to catalyze the sulfate conjugation of a wide variety of acceptor molecules bearing a hydroxyl or an amine group. Sulfonation increases the water solubility of most compounds, and therefore their renal excretion, but it can also result in bioactivation to form active metabolites. Displays broad substrate specificity for small phenolic compounds. Plays an important roles in the sulfonation of endogenous molecules such as steroid hormones. Mediates the sulfate conjugation of a variety of xenobiotics, including the drugs acetaminophen and minoxidil. Mediates also the metabolic activation of carcinogenic N-hydroxyarylamines leading to highly reactive intermediates capable of forming DNA adducts, potentially resulting in mutagenesis. May play a role in gut microbiota-host metabolic interaction. O-sulfonates 4-ethylphenol (4-EP), a dietary tyrosine-derived metabolite produced by gut bacteria. The product 4-EPS crosses the blood-brain barrier and may negatively regulate oligodendrocyte maturation and myelination, affecting the functional connectivity of different brain regions associated with the limbic system. Catalyzes the sulfate conjugation of dopamine. Catalyzes the sulfation of T4 (L-thyroxine/3,5,3',5'-tetraiodothyronine), T3 (3,5,3'-triiodothyronine), rT3 (3,3',5'-triiodothyronine) and 3,3'-T2 (3,3'-diiodothyronine), with a substrate preference of 3,3'-T2 &gt; rT3 &gt; T3 &gt; T4. In Rattus norvegicus (Rat), this protein is Sulfotransferase 1A1 (Sult1a1).